A 121-amino-acid chain; its full sequence is Small ribosomal subunit protein uS13 (121 aa).

Residues 92–121 (KRGLPVRGQRTRTNARTRKGPRRAAASLKK) are disordered.

The protein belongs to the universal ribosomal protein uS13 family. As to quaternary structure, part of the 30S ribosomal subunit. Forms a loose heterodimer with protein S19. Forms two bridges to the 50S subunit in the 70S ribosome.

Located at the top of the head of the 30S subunit, it contacts several helices of the 16S rRNA. In the 70S ribosome it contacts the 23S rRNA (bridge B1a) and protein L5 of the 50S subunit (bridge B1b), connecting the 2 subunits; these bridges are implicated in subunit movement. Contacts the tRNAs in the A and P-sites. In Bordetella bronchiseptica (strain ATCC BAA-588 / NCTC 13252 / RB50) (Alcaligenes bronchisepticus), this protein is Small ribosomal subunit protein uS13.